Here is a 276-residue protein sequence, read N- to C-terminus: Mitochondrial outer membrane protein porin 1 (276 aa).

It belongs to the eukaryotic mitochondrial porin (TC 1.B.8.1) family. As to expression, expressed in shoot meristems, root meristematic zone, lateral roots, leaves, stigma and anthers.

The protein resides in the mitochondrion outer membrane. Forms a channel through the mitochondrial outer membrane that allows diffusion of small hydrophilic molecules. The channel adopts an open conformation at low or zero membrane potential and a closed conformation at potentials above 30-40 mV. The open state has a weak anion selectivity whereas the closed state is cation-selective. Involved in plant development at reproductive stage, is important for pollen development and may regulate hydrogen peroxide generation during disease resistance. This chain is Mitochondrial outer membrane protein porin 1 (VDAC1), found in Arabidopsis thaliana (Mouse-ear cress).